The following is a 151-amino-acid chain: Large ribosomal subunit protein bL9 (151 aa).

It belongs to the bacterial ribosomal protein bL9 family.

Binds to the 23S rRNA. The sequence is that of Large ribosomal subunit protein bL9 from Thermosipho melanesiensis (strain DSM 12029 / CIP 104789 / BI429).